The following is a 238-amino-acid chain: Dephospho-CoA kinase (238 aa).

The region spanning 3–233 is the DPCK domain; that stretch reads IIGLTGGVGT…QRPFASPPRA (231 aa). 11–16 serves as a coordination point for ATP; the sequence is GTGKST. 2 disordered regions span residues 110–129 and 219–238; these read HGVP…VGFS and LASA…YSDG.

This sequence belongs to the CoaE family.

The protein resides in the cytoplasm. It catalyses the reaction 3'-dephospho-CoA + ATP = ADP + CoA + H(+). It participates in cofactor biosynthesis; coenzyme A biosynthesis; CoA from (R)-pantothenate: step 5/5. Catalyzes the phosphorylation of the 3'-hydroxyl group of dephosphocoenzyme A to form coenzyme A. This chain is Dephospho-CoA kinase, found in Synechococcus sp. (strain JA-2-3B'a(2-13)) (Cyanobacteria bacterium Yellowstone B-Prime).